The following is a 119-amino-acid chain: Immunoglobulin lambda variable 2-11 (119 aa).

Residues 1–19 (MAWALLLLSLLTQGTGSWA) form the signal peptide. Q20 carries the post-translational modification Pyrrolidone carboxylic acid. The interval 20–44 (QSALTQPRSVSGSPGQSVTISCTGT) is framework-1. Residues 20–119 (QSALTQPRSV…CSYAGSYTFH (100 aa)) form the Ig-like domain. Residues C41 and C109 are joined by a disulfide bond. Residues 45–53 (SSDVGGYNY) form a complementarity-determining-1 region. A framework-2 region spans residues 54 to 70 (VSWYQQHPGKAPKLMIY). Residues 71–73 (DVS) are complementarity-determining-2. Residues 74 to 109 (KRPSGVPDRFSGSKSGNTASLTISGLQAEDEADYYC) are framework-3. The segment at 110–119 (CSYAGSYTFH) is complementarity-determining-3.

In terms of assembly, immunoglobulins are composed of two identical heavy chains and two identical light chains; disulfide-linked.

Its subcellular location is the secreted. It localises to the cell membrane. Functionally, v region of the variable domain of immunoglobulin light chains that participates in the antigen recognition. Immunoglobulins, also known as antibodies, are membrane-bound or secreted glycoproteins produced by B lymphocytes. In the recognition phase of humoral immunity, the membrane-bound immunoglobulins serve as receptors which, upon binding of a specific antigen, trigger the clonal expansion and differentiation of B lymphocytes into immunoglobulins-secreting plasma cells. Secreted immunoglobulins mediate the effector phase of humoral immunity, which results in the elimination of bound antigens. The antigen binding site is formed by the variable domain of one heavy chain, together with that of its associated light chain. Thus, each immunoglobulin has two antigen binding sites with remarkable affinity for a particular antigen. The variable domains are assembled by a process called V-(D)-J rearrangement and can then be subjected to somatic hypermutations which, after exposure to antigen and selection, allow affinity maturation for a particular antigen. The polypeptide is Immunoglobulin lambda variable 2-11 (Homo sapiens (Human)).